A 1441-amino-acid chain; its full sequence is Probable cleavage and polyadenylation specificity factor subunit 1 (1441 aa).

It belongs to the CPSF1 family. CPSF is a heterotetramer composed of four distinct subunits 160, 100, 70 and 30 kDa.

The protein localises to the nucleus. Functionally, CPSF plays a key role in pre-mRNA 3'-end formation, recognizing the AAUAAA signal sequence and interacting with poly(A)polymerase and other factors to bring about cleavage and poly(A) addition. This subunit is involved in the RNA recognition step of the polyadenylation reaction. The sequence is that of Probable cleavage and polyadenylation specificity factor subunit 1 from Oryza sativa subsp. japonica (Rice).